Consider the following 254-residue polypeptide: Triosephosphate isomerase (254 aa).

9 to 11 (NWK) contributes to the substrate binding site. H96 (electrophile) is an active-site residue. The active-site Proton acceptor is the E169. Residues G175, S215, and 236–237 (GG) contribute to the substrate site.

It belongs to the triosephosphate isomerase family. As to quaternary structure, homodimer.

It localises to the cytoplasm. The catalysed reaction is D-glyceraldehyde 3-phosphate = dihydroxyacetone phosphate. It functions in the pathway carbohydrate biosynthesis; gluconeogenesis. It participates in carbohydrate degradation; glycolysis; D-glyceraldehyde 3-phosphate from glycerone phosphate: step 1/1. Involved in the gluconeogenesis. Catalyzes stereospecifically the conversion of dihydroxyacetone phosphate (DHAP) to D-glyceraldehyde-3-phosphate (G3P). The sequence is that of Triosephosphate isomerase from Borrelia hermsii (strain HS1 / DAH).